The sequence spans 153 residues: 6,7-dimethyl-8-ribityllumazine synthase (153 aa).

Residues Phe-22, 56 to 58 (AFE), and 80 to 82 (AVI) each bind 5-amino-6-(D-ribitylamino)uracil. 85–86 (AT) lines the (2S)-2-hydroxy-3-oxobutyl phosphate pocket. His-88 acts as the Proton donor in catalysis. Phe-113 provides a ligand contact to 5-amino-6-(D-ribitylamino)uracil. A (2S)-2-hydroxy-3-oxobutyl phosphate-binding site is contributed by Arg-127.

It belongs to the DMRL synthase family.

It catalyses the reaction (2S)-2-hydroxy-3-oxobutyl phosphate + 5-amino-6-(D-ribitylamino)uracil = 6,7-dimethyl-8-(1-D-ribityl)lumazine + phosphate + 2 H2O + H(+). The protein operates within cofactor biosynthesis; riboflavin biosynthesis; riboflavin from 2-hydroxy-3-oxobutyl phosphate and 5-amino-6-(D-ribitylamino)uracil: step 1/2. Catalyzes the formation of 6,7-dimethyl-8-ribityllumazine by condensation of 5-amino-6-(D-ribitylamino)uracil with 3,4-dihydroxy-2-butanone 4-phosphate. This is the penultimate step in the biosynthesis of riboflavin. The sequence is that of 6,7-dimethyl-8-ribityllumazine synthase from Alkaliphilus metalliredigens (strain QYMF).